The following is a 492-amino-acid chain: PHO85 cyclin-8 (492 aa).

Disordered regions lie at residues 1-32 (MAND…DNDS), 143-163 (SGSG…GTGR), and 223-252 (KVNS…ENES). The segment covering 8-20 (NKSLINDALTRSM) has biased composition (polar residues). Over residues 23–32 (FYDDDDDNDS) the composition is skewed to acidic residues. Residue serine 32 is modified to Phosphoserine.

Belongs to the cyclin family. PHO80 subfamily. Forms a cyclin-CDK complex with PHO85.

It localises to the cytoplasm. Its subcellular location is the nucleus. Cyclin partner of the cyclin-dependent kinase (CDK) PHO85. Together with cyclin PCL10, negatively controls glycogen accumulation under favorable growth conditions. Involved in phosphorylation and negative regulation of glycogen synthase GSY2. Also has minor GLC8 kinase activity. This Saccharomyces cerevisiae (strain ATCC 204508 / S288c) (Baker's yeast) protein is PHO85 cyclin-8 (PCL8).